The chain runs to 63 residues: UPF0434 protein GDI0182/Gdia_2252 (63 aa).

Belongs to the UPF0434 family.

The protein is UPF0434 protein GDI0182/Gdia_2252 of Gluconacetobacter diazotrophicus (strain ATCC 49037 / DSM 5601 / CCUG 37298 / CIP 103539 / LMG 7603 / PAl5).